The chain runs to 322 residues: Glycerol-3-phosphate dehydrogenase [NAD(P)+] (322 aa).

NADPH contacts are provided by Trp-11, Arg-31, Arg-32, and Lys-101. 2 residues coordinate sn-glycerol 3-phosphate: Lys-101 and Gly-130. Ala-134 is an NADPH binding site. Sn-glycerol 3-phosphate is bound by residues Lys-184, Asp-237, Ser-247, Arg-248, and Asn-249. Lys-184 acts as the Proton acceptor in catalysis. Residue Arg-248 participates in NADPH binding. NADPH is bound by residues Val-270 and Glu-272.

Belongs to the NAD-dependent glycerol-3-phosphate dehydrogenase family.

It localises to the cytoplasm. The catalysed reaction is sn-glycerol 3-phosphate + NAD(+) = dihydroxyacetone phosphate + NADH + H(+). It catalyses the reaction sn-glycerol 3-phosphate + NADP(+) = dihydroxyacetone phosphate + NADPH + H(+). The protein operates within membrane lipid metabolism; glycerophospholipid metabolism. Functionally, catalyzes the reduction of the glycolytic intermediate dihydroxyacetone phosphate (DHAP) to sn-glycerol 3-phosphate (G3P), the key precursor for phospholipid synthesis. The polypeptide is Glycerol-3-phosphate dehydrogenase [NAD(P)+] (Thermus thermophilus (strain ATCC BAA-163 / DSM 7039 / HB27)).